The chain runs to 436 residues: 3-ketoacyl-CoA thiolase (436 aa).

C99 acts as the Acyl-thioester intermediate in catalysis. Residues H392 and C422 each act as proton acceptor in the active site.

This sequence belongs to the thiolase-like superfamily. Thiolase family. Heterotetramer of two alpha chains (FadJ) and two beta chains (FadI).

It localises to the cytoplasm. The enzyme catalyses an acyl-CoA + acetyl-CoA = a 3-oxoacyl-CoA + CoA. It participates in lipid metabolism; fatty acid beta-oxidation. Its function is as follows. Catalyzes the final step of fatty acid oxidation in which acetyl-CoA is released and the CoA ester of a fatty acid two carbons shorter is formed. In Escherichia coli O157:H7, this protein is 3-ketoacyl-CoA thiolase.